The primary structure comprises 276 residues: Large ribosomal subunit protein uL2 (276 aa).

Residues 224-265 form a disordered region; it reads GTAMNPIDHPHGGGEGKNFGKHPVSPWGVQTKGKRTRSNKRT.

The protein belongs to the universal ribosomal protein uL2 family. As to quaternary structure, part of the 50S ribosomal subunit. Forms a bridge to the 30S subunit in the 70S ribosome.

One of the primary rRNA binding proteins. Required for association of the 30S and 50S subunits to form the 70S ribosome, for tRNA binding and peptide bond formation. It has been suggested to have peptidyltransferase activity; this is somewhat controversial. Makes several contacts with the 16S rRNA in the 70S ribosome. In Blochmanniella floridana, this protein is Large ribosomal subunit protein uL2.